A 224-amino-acid polypeptide reads, in one-letter code: ATP synthase subunit a (224 aa).

A run of 6 helical transmembrane segments spans residues Phe-17 to Ala-37, Leu-78 to Phe-98, Phe-104 to Ile-124, Phe-136 to Phe-156, Phe-176 to Leu-196, and Phe-201 to Val-221.

It belongs to the ATPase A chain family. In terms of assembly, F-type ATPases have 2 components, CF(1) - the catalytic core - and CF(0) - the membrane proton channel. CF(1) has five subunits: alpha(3), beta(3), gamma(1), delta(1), epsilon(1). CF(0) has three main subunits: a(1), b(2) and c(9-12). The alpha and beta chains form an alternating ring which encloses part of the gamma chain. CF(1) is attached to CF(0) by a central stalk formed by the gamma and epsilon chains, while a peripheral stalk is formed by the delta and b chains.

The protein resides in the cell inner membrane. In terms of biological role, key component of the proton channel; it plays a direct role in the translocation of protons across the membrane. The protein is ATP synthase subunit a of Sulfurimonas denitrificans (strain ATCC 33889 / DSM 1251) (Thiomicrospira denitrificans (strain ATCC 33889 / DSM 1251)).